The following is a 344-amino-acid chain: tRNA N6-adenosine threonylcarbamoyltransferase (344 aa).

Histidine 115 and histidine 119 together coordinate Fe cation. Substrate contacts are provided by residues 137–141 (LVSGG), aspartate 170, glycine 183, aspartate 187, and asparagine 276. Aspartate 306 serves as a coordination point for Fe cation.

This sequence belongs to the KAE1 / TsaD family. Requires Fe(2+) as cofactor.

It localises to the cytoplasm. It catalyses the reaction L-threonylcarbamoyladenylate + adenosine(37) in tRNA = N(6)-L-threonylcarbamoyladenosine(37) in tRNA + AMP + H(+). In terms of biological role, required for the formation of a threonylcarbamoyl group on adenosine at position 37 (t(6)A37) in tRNAs that read codons beginning with adenine. Is involved in the transfer of the threonylcarbamoyl moiety of threonylcarbamoyl-AMP (TC-AMP) to the N6 group of A37, together with TsaE and TsaB. TsaD likely plays a direct catalytic role in this reaction. In Limosilactobacillus fermentum (strain NBRC 3956 / LMG 18251) (Lactobacillus fermentum), this protein is tRNA N6-adenosine threonylcarbamoyltransferase.